The sequence spans 388 residues: NADH-quinone oxidoreductase subunit D 2 (388 aa).

The protein belongs to the complex I 49 kDa subunit family. In terms of assembly, NDH-1 is composed of 14 different subunits. Subunits NuoB, C, D, E, F, and G constitute the peripheral sector of the complex.

It is found in the cell membrane. The enzyme catalyses a quinone + NADH + 5 H(+)(in) = a quinol + NAD(+) + 4 H(+)(out). NDH-1 shuttles electrons from NADH, via FMN and iron-sulfur (Fe-S) centers, to quinones in the respiratory chain. The immediate electron acceptor for the enzyme in this species is believed to be a menaquinone. Couples the redox reaction to proton translocation (for every two electrons transferred, four hydrogen ions are translocated across the cytoplasmic membrane), and thus conserves the redox energy in a proton gradient. In Salinispora tropica (strain ATCC BAA-916 / DSM 44818 / JCM 13857 / NBRC 105044 / CNB-440), this protein is NADH-quinone oxidoreductase subunit D 2.